Reading from the N-terminus, the 151-residue chain is uncharacterized protein (151 aa).

3 helical membrane passes run 14 to 34 (GAAL…YWLI), 45 to 65 (ISLV…GYLI), and 91 to 111 (VIVA…ASLI).

The protein localises to the cell membrane. This is an uncharacterized protein from Bacillus subtilis (strain 168).